We begin with the raw amino-acid sequence, 69 residues long: Alpha-conotoxin SrIA/SrIB (69 aa).

The signal sequence occupies residues 1 to 21 (MGMRMMFTVFLLVVLATTVVS). Residues 22–48 (FTSDSAFDSRNVAANDKVSDMIALTAR) constitute a propeptide that is removed on maturation. 2 cysteine pairs are disulfide-bonded: C51-C57 and C52-C65. The tract at residues 53–55 (SRP) is ser-Xaa-Pro motif, crucial for potent interaction with nAChR. The residue at position 55 (P55) is a 4-hydroxyproline; in form Sr1A and Sr1B. E60 is modified (4-carboxyglutamate; in form Sr1A). E63 carries the 4-carboxyglutamate; in form Sr1A and Sr1B modification. G66 carries the glycine amide; in form Sr1A and Sr1B modification.

The protein belongs to the conotoxin A superfamily. Post-translationally, occurs in 2 forms which differ in the post-translational modification of Glu-60. In form SrA1 Glu-60 is 4-carboxyglutamate while in form SrA2 Glu-60 is unmodified. In terms of tissue distribution, expressed by the venom duct.

It localises to the secreted. In terms of biological role, alpha-conotoxins act on postsynaptic membranes, they bind to the nicotinic acetylcholine receptors (nAChR) and thus inhibit them. Has weak blocking effects on muscle nAChR composed of alpha-1/beta-1/gamma/delta subunits and the central nervous system nAChR composed of alpha-4/beta-2 subunits. Does not detectably affect the peripheral nervous system nAChR composed of alpha-3/beta-4 subunits. Low toxin concentrations potentiate currents in muscle nAChR composed of alpha-1/beta-1/gamma/delta subunits and central nervous system nAChR composed of alpha-4/beta-2 subunits, but not the peripheral nervous system nAChR composed of alpha-3/beta-4 subunits. This is Alpha-conotoxin SrIA/SrIB from Conus spurius (Alphabet cone).